We begin with the raw amino-acid sequence, 269 residues long: Imidazoleglycerol-phosphate dehydratase 3, chloroplastic (269 aa).

The transit peptide at Met1–Met51 directs the protein to the chloroplast. Substrate-binding positions include Glu83, His109–His117, His135–Glu139, Arg161, and Arg183. Mn(2+) is bound by residues His109, His135, His136, and Glu139. Residues His207, His231, His232, and Glu235 each contribute to the Mn(2+) site. Substrate is bound by residues His231–Lys239 and Ser261–Lys263.

This sequence belongs to the imidazoleglycerol-phosphate dehydratase family. Requires Mn(2+) as cofactor.

Its subcellular location is the plastid. The protein localises to the chloroplast. The catalysed reaction is D-erythro-1-(imidazol-4-yl)glycerol 3-phosphate = 3-(imidazol-4-yl)-2-oxopropyl phosphate + H2O. Its pathway is amino-acid biosynthesis; L-histidine biosynthesis; L-histidine from 5-phospho-alpha-D-ribose 1-diphosphate: step 6/9. This is Imidazoleglycerol-phosphate dehydratase 3, chloroplastic from Triticum aestivum (Wheat).